Reading from the N-terminus, the 299-residue chain is tRNA pseudouridine synthase B (299 aa).

Aspartate 47 serves as the catalytic Nucleophile.

This sequence belongs to the pseudouridine synthase TruB family. Type 1 subfamily.

The catalysed reaction is uridine(55) in tRNA = pseudouridine(55) in tRNA. Its function is as follows. Responsible for synthesis of pseudouridine from uracil-55 in the psi GC loop of transfer RNAs. This is tRNA pseudouridine synthase B from Dechloromonas aromatica (strain RCB).